The sequence spans 55 residues: Large ribosomal subunit protein bL33 (55 aa).

Belongs to the bacterial ribosomal protein bL33 family.

This is Large ribosomal subunit protein bL33 from Buchnera aphidicola subsp. Baizongia pistaciae (strain Bp).